Reading from the N-terminus, the 297-residue chain is Nucleotide-binding protein DSY4845 (297 aa).

13 to 20 is a binding site for ATP; the sequence is GLSGAGKT. Residue 64–67 coordinates GTP; that stretch reads DLRG.

It belongs to the RapZ-like family.

Displays ATPase and GTPase activities. The chain is Nucleotide-binding protein DSY4845 from Desulfitobacterium hafniense (strain Y51).